Consider the following 175-residue polypeptide: Adenine phosphoribosyltransferase (175 aa).

Belongs to the purine/pyrimidine phosphoribosyltransferase family. In terms of assembly, homodimer.

It localises to the cytoplasm. The catalysed reaction is AMP + diphosphate = 5-phospho-alpha-D-ribose 1-diphosphate + adenine. It functions in the pathway purine metabolism; AMP biosynthesis via salvage pathway; AMP from adenine: step 1/1. Catalyzes a salvage reaction resulting in the formation of AMP, that is energically less costly than de novo synthesis. In Maricaulis maris (strain MCS10) (Caulobacter maris), this protein is Adenine phosphoribosyltransferase.